The primary structure comprises 332 residues: Putative peptide import ATP-binding protein BruAb2_1033 (332 aa).

The region spanning Leu11–Leu261 is the ABC transporter domain. Gly47 to Ser54 contributes to the ATP binding site.

The protein belongs to the ABC transporter superfamily. The complex is composed of two ATP-binding proteins (BruAb2_1033 and BruAb2_1034), two transmembrane proteins (BruAb2_1031 and BruAb2_1032) and a solute-binding protein (BruAb2_1030).

It localises to the cell inner membrane. Functionally, probably part of an ABC transporter complex that could be involved in peptide import. Probably responsible for energy coupling to the transport system. This is Putative peptide import ATP-binding protein BruAb2_1033 from Brucella abortus biovar 1 (strain 9-941).